Consider the following 445-residue polypeptide: Tubulin beta chain (445 aa).

An MREI motif motif is present at residues Met1–Ile4. Residues Gln11, Glu69, Ser138, Gly142, Thr143, Gly144, Asn204, and Asn226 each contribute to the GTP site. Glu69 is a Mg(2+) binding site. The tract at residues Glu421 to Ala445 is disordered. Over residues Thr429–Ala445 the composition is skewed to acidic residues. Glu438 is subject to 5-glutamyl polyglutamate.

This sequence belongs to the tubulin family. In terms of assembly, dimer of alpha and beta chains. A typical microtubule is a hollow water-filled tube with an outer diameter of 25 nm and an inner diameter of 15 nM. Alpha-beta heterodimers associate head-to-tail to form protofilaments running lengthwise along the microtubule wall with the beta-tubulin subunit facing the microtubule plus end conferring a structural polarity. Microtubules usually have 13 protofilaments but different protofilament numbers can be found in some organisms and specialized cells. It depends on Mg(2+) as a cofactor. In terms of processing, some glutamate residues at the C-terminus are polyglycylated, resulting in polyglycine chains on the gamma-carboxyl group. Glycylation is mainly limited to tubulin incorporated into axonemes (cilia and flagella) whereas glutamylation is prevalent in neuronal cells, centrioles, axonemes, and the mitotic spindle. Both modifications can coexist on the same protein on adjacent residues, and lowering polyglycylation levels increases polyglutamylation, and reciprocally. The precise function of polyglycylation is still unclear. Post-translationally, some glutamate residues at the C-terminus are polyglutamylated, resulting in polyglutamate chains on the gamma-carboxyl group. Polyglutamylation plays a key role in microtubule severing by spastin (SPAST). SPAST preferentially recognizes and acts on microtubules decorated with short polyglutamate tails: severing activity by SPAST increases as the number of glutamates per tubulin rises from one to eight, but decreases beyond this glutamylation threshold. As to expression, brain.

The protein localises to the cytoplasm. The protein resides in the cytoskeleton. Tubulin is the major constituent of microtubules, a cylinder consisting of laterally associated linear protofilaments composed of alpha- and beta-tubulin heterodimers. Microtubules grow by the addition of GTP-tubulin dimers to the microtubule end, where a stabilizing cap forms. Below the cap, tubulin dimers are in GDP-bound state, owing to GTPase activity of alpha-tubulin. The chain is Tubulin beta chain from Pseudopleuronectes americanus (Winter flounder).